The following is a 32-amino-acid chain: Delta-conotoxin-like CnVIC (32 aa).

3 disulfides stabilise this stretch: Cys-3/Cys-18, Cys-10/Cys-22, and Cys-17/Cys-27. 4-hydroxyproline occurs at positions 6 and 14.

This sequence belongs to the conotoxin O1 superfamily. As to expression, expressed by the venom duct.

It is found in the secreted. Functionally, delta-conotoxins bind to site 6 of voltage-gated sodium channels (Nav) and inhibit the inactivation process. This toxin acts on Nav1.2/SCN2A, Nav1.4/SCN4A, Nav1.5/SCN5A (weak activity), Nav1.6/SCN8A (EC(50)=2.5 uM). The sequence is that of Delta-conotoxin-like CnVIC from Conus consors (Singed cone).